Reading from the N-terminus, the 211-residue chain is Large ribosomal subunit protein uL4 (211 aa).

The tract at residues 50–77 (STLTKGEVSGGGKKPYKQKHTGKARQGS) is disordered. Over residues 63-72 (KPYKQKHTGK) the composition is skewed to basic residues.

Belongs to the universal ribosomal protein uL4 family. Part of the 50S ribosomal subunit.

Its function is as follows. One of the primary rRNA binding proteins, this protein initially binds near the 5'-end of the 23S rRNA. It is important during the early stages of 50S assembly. It makes multiple contacts with different domains of the 23S rRNA in the assembled 50S subunit and ribosome. Forms part of the polypeptide exit tunnel. This chain is Large ribosomal subunit protein uL4, found in Mycoplasma genitalium (strain ATCC 33530 / DSM 19775 / NCTC 10195 / G37) (Mycoplasmoides genitalium).